We begin with the raw amino-acid sequence, 436 residues long: Probable sodium/metabolite cotransporter BASS4, chloroplastic (436 aa).

The N-terminal 47 residues, 1–47 (MAIASTLASTQNPFLCLRQPPSPGNRSVVFRRCQDPCGRRWISRSIR), are a transit peptide targeting the chloroplast. 9 helical membrane-spanning segments follow: residues 109–129 (FLPL…TLGC), 131–151 (ADKY…SGLT), 157–177 (IGAA…ILLL), 195–215 (LVTG…GVAL), 225–245 (LALA…PFWV), 257–277 (FPTD…LIIG), 297–314 (LFSK…WIQV), 328–348 (VFLA…AFNA), and 403–423 (PCVA…NLWL).

Belongs to the bile acid:sodium symporter (BASS) (TC 2.A.28) family.

The protein resides in the membrane. It localises to the plastid. It is found in the chloroplast envelope. Functionally, may function as sodium-coupled metabolite transporter across the chloroplast envelope. This chain is Probable sodium/metabolite cotransporter BASS4, chloroplastic (BASS4), found in Arabidopsis thaliana (Mouse-ear cress).